The following is a 226-amino-acid chain: MNENLFASFTTPTMMGLPIVILIVLFPSILFPSPDRLINNRLTSIQQWLIQLTSKQMLSIHNHKGQTWALMLISLILFIGSTNLLGLLPHSFTPTTQLSMNLGMAIPLWAGTVITGFRHKTKASLAHFLPQGTPLPLIPMLVIIETISLFIQPMALAVRLTANITAGHLLIHLIGGATLALMDISTTTAFITFIVLILLTILEFAVALIQAYVFTLLVSLYLHDNT.

The next 6 helical transmembrane spans lie at 12-32 (PTMM…ILFP), 68-88 (WALM…LGLL), 97-117 (QLSM…ITGF), 138-158 (IPML…ALAV), 164-184 (ITAG…LMDI), and 189-209 (AFIT…VALI).

This sequence belongs to the ATPase A chain family. As to quaternary structure, component of the ATP synthase complex composed at least of ATP5F1A/subunit alpha, ATP5F1B/subunit beta, ATP5MC1/subunit c (homooctomer), MT-ATP6/subunit a, MT-ATP8/subunit 8, ATP5ME/subunit e, ATP5MF/subunit f, ATP5MG/subunit g, ATP5MK/subunit k, ATP5MJ/subunit j, ATP5F1C/subunit gamma, ATP5F1D/subunit delta, ATP5F1E/subunit epsilon, ATP5PF/subunit F6, ATP5PB/subunit b, ATP5PD/subunit d, ATP5PO/subunit OSCP. ATP synthase complex consists of a soluble F(1) head domain (subunits alpha(3) and beta(3)) - the catalytic core - and a membrane F(0) domain - the membrane proton channel (subunits c, a, 8, e, f, g, k and j). These two domains are linked by a central stalk (subunits gamma, delta, and epsilon) rotating inside the F1 region and a stationary peripheral stalk (subunits F6, b, d, and OSCP). Interacts with DNAJC30; interaction is direct.

It localises to the mitochondrion inner membrane. It carries out the reaction H(+)(in) = H(+)(out). In terms of biological role, subunit a, of the mitochondrial membrane ATP synthase complex (F(1)F(0) ATP synthase or Complex V) that produces ATP from ADP in the presence of a proton gradient across the membrane which is generated by electron transport complexes of the respiratory chain. ATP synthase complex consist of a soluble F(1) head domain - the catalytic core - and a membrane F(1) domain - the membrane proton channel. These two domains are linked by a central stalk rotating inside the F(1) region and a stationary peripheral stalk. During catalysis, ATP synthesis in the catalytic domain of F(1) is coupled via a rotary mechanism of the central stalk subunits to proton translocation. With the subunit c (ATP5MC1), forms the proton-conducting channel in the F(0) domain, that contains two crucial half-channels (inlet and outlet) that facilitate proton movement from the mitochondrial intermembrane space (IMS) into the matrix. Protons are taken up via the inlet half-channel and released through the outlet half-channel, following a Grotthuss mechanism. In Halichoerus grypus (Gray seal), this protein is ATP synthase F(0) complex subunit a.